Consider the following 229-residue polypeptide: Urease accessory protein UreF (229 aa).

Belongs to the UreF family. UreD, UreF and UreG form a complex that acts as a GTP-hydrolysis-dependent molecular chaperone, activating the urease apoprotein by helping to assemble the nickel containing metallocenter of UreC. The UreE protein probably delivers the nickel.

It is found in the cytoplasm. Its function is as follows. Required for maturation of urease via the functional incorporation of the urease nickel metallocenter. The protein is Urease accessory protein UreF of Trichormus variabilis (strain ATCC 29413 / PCC 7937) (Anabaena variabilis).